A 461-amino-acid polypeptide reads, in one-letter code: MDYSYDEDLDELCPVCGDKVSGYHYGLLTCESCKGFFKRTVQNNKHYTCTESQSCKIDKTQRKRCPFCRFQKCLTVGMRLEAVRADRMRGGRNKFGPMYKRDRALKQQKKAQIRANGFKLETGPPVGVPPPPPPPPDYMLPHGLHASEPKGLASGPPAGPLGDFGAPALPMAVPSAHGPLAGYLYPAFPGRAIKSEYPEPYASPPQPGPPYGYPEPFSGGPGVPELILQLLQLEPDEDQVRARIVGCLQEPAKGRPDQPAPFSLLCRMADQTFISIVDWARRCMVFKELEVADQMTLLQNCWSELLVFDHIYRQIQHGKEGSILLVTGQEVELTTVAAQAGSLLHSLVLRAQELVLQLHALQLDRQEFVCLKFLILFSLDVKFLNNHSLVKEAQEKANAALLDYTLCHYPHCGDKFQQLLLCLVEVRALSMQAKEYLYHKHLGNEMPRNNLLIEMLQAKQT.

Positions 10–85 form a DNA-binding region, nuclear receptor; the sequence is DELCPVCGDK…VGMRLEAVRA (76 aa). The NR C4-type zinc-finger motif lies at 13 to 33; sequence CPVCGDKVSGYHYGLLTCESC. N6-acetyllysine is present on residues Lys-34, Lys-38, and Lys-72. The NR C4-type zinc finger occupies 49-73; it reads CTESQSCKIDKTQRKRCPFCRFQKC. The segment at 116–158 is disordered; it reads NGFKLETGPPVGVPPPPPPPPDYMLPHGLHASEPKGLASGPPA. Residue Lys-119 forms a Glycyl lysine isopeptide (Lys-Gly) (interchain with G-Cter in SUMO) linkage. Residues 126-138 show a composition bias toward pro residues; the sequence is VGVPPPPPPPPDY. Lys-194 participates in a covalent cross-link: Glycyl lysine isopeptide (Lys-Gly) (interchain with G-Cter in SUMO). Ser-203 carries the post-translational modification Phosphoserine; by CDK7. The region spanning 222–459 is the NR LBD domain; sequence GVPELILQLL…NLLIEMLQAK (238 aa). An important for dimerization region spans residues 230–461; that stretch reads LLQLEPDEDQ…LIEMLQAKQT (232 aa). Residues Gly-341, Tyr-436, and Lys-440 each coordinate a 1,2-diacyl-sn-glycero-3-phosphocholine.

It belongs to the nuclear hormone receptor family. NR5 subfamily. In terms of assembly, binds DNA as a monomer. Part of a complex consisting of SFPQ, NONO and NR5A1. Interacts with NR0B2. Interacts with DGKQ and CDK7. Binds to and activated by HIPK3. May be regulated by phosphorylation and dephosphorylation. In terms of processing, acetylation stimulates the transcriptional activity. Post-translationally, sumoylation reduces CDK7-mediated phosphorylation on Ser-203. Phosphorylated on Ser-203 by CDK7. This phosphorylation promotes transcriptional activity. Adrenal, ovary, testis, placenta, adipocyte, and brain.

The protein resides in the nucleus. Functionally, transcriptional activator. Seems to be essential for sexual differentiation and formation of the primary steroidogenic tissues. Binds to the Ad4 site found in the promoter region of steroidogenic P450 genes such as CYP11A, CYP11B and CYP21B. Also regulates the AMH/Muellerian inhibiting substance gene as well as the AHCH and STAR genes. 5'-YCAAGGYC-3' and 5'-RRAGGTCA-3' are the consensus sequences for the recognition by NR5A1. The SFPQ-NONO-NR5A1 complex binds to the CYP17 promoter and regulates basal and cAMP-dependent transcriptional activity. Binds phospholipids with a phosphatidylinositol (PI) headgroup, in particular PI(3,4)P2 and PI(3,4,5)P3. Activated by the phosphorylation of NR5A1 by HIPK3 leading to increased steroidogenic gene expression upon cAMP signaling pathway stimulation. This Bos taurus (Bovine) protein is Steroidogenic factor 1 (NR5A1).